The following is a 331-amino-acid chain: 4-hydroxythreonine-4-phosphate dehydrogenase (331 aa).

Residues His137 and Thr138 each coordinate substrate. A divalent metal cation is bound by residues His167, His212, and His267. Substrate is bound by residues Lys275, Asn284, and Arg293.

Belongs to the PdxA family. In terms of assembly, homodimer. Zn(2+) is required as a cofactor. It depends on Mg(2+) as a cofactor. The cofactor is Co(2+).

It localises to the cytoplasm. The catalysed reaction is 4-(phosphooxy)-L-threonine + NAD(+) = 3-amino-2-oxopropyl phosphate + CO2 + NADH. It functions in the pathway cofactor biosynthesis; pyridoxine 5'-phosphate biosynthesis; pyridoxine 5'-phosphate from D-erythrose 4-phosphate: step 4/5. Functionally, catalyzes the NAD(P)-dependent oxidation of 4-(phosphooxy)-L-threonine (HTP) into 2-amino-3-oxo-4-(phosphooxy)butyric acid which spontaneously decarboxylates to form 3-amino-2-oxopropyl phosphate (AHAP). The sequence is that of 4-hydroxythreonine-4-phosphate dehydrogenase from Yersinia enterocolitica serotype O:8 / biotype 1B (strain NCTC 13174 / 8081).